A 184-amino-acid polypeptide reads, in one-letter code: Photosystem I assembly protein Ycf4 (184 aa).

2 consecutive transmembrane segments (helical) span residues 22–42 (FCWAFILFVGSVGFLLVGISS) and 57–77 (IVFFPQGIVMSFYGIAGLFIS).

It belongs to the Ycf4 family.

It localises to the plastid. It is found in the chloroplast thylakoid membrane. Functionally, seems to be required for the assembly of the photosystem I complex. The protein is Photosystem I assembly protein Ycf4 of Coffea arabica (Arabian coffee).